A 298-amino-acid chain; its full sequence is Protease HtpX homolog (298 aa).

2 helical membrane passes run 16–36 (VMFG…YLFW) and 38–58 (SWVS…LIMI). His144 provides a ligand contact to Zn(2+). Glu145 is a catalytic residue. A Zn(2+)-binding site is contributed by His148. The next 2 membrane-spanning stretches (helical) occupy residues 159–179 (IALA…NWFW) and 197–217 (IIGL…ASIA). Glu226 contributes to the Zn(2+) binding site.

Belongs to the peptidase M48B family. Requires Zn(2+) as cofactor.

It is found in the cell membrane. This is Protease HtpX homolog from Levilactobacillus brevis (strain ATCC 367 / BCRC 12310 / CIP 105137 / JCM 1170 / LMG 11437 / NCIMB 947 / NCTC 947) (Lactobacillus brevis).